We begin with the raw amino-acid sequence, 187 residues long: UPF0301 protein WIGBR1650 (187 aa).

It belongs to the UPF0301 (AlgH) family.

This Wigglesworthia glossinidia brevipalpis protein is UPF0301 protein WIGBR1650.